Consider the following 126-residue polypeptide: Glycine cleavage system H protein (126 aa).

The Lipoyl-binding domain maps to Thr22–Lys104. Lys63 bears the N6-lipoyllysine mark.

It belongs to the GcvH family. As to quaternary structure, the glycine cleavage system is composed of four proteins: P, T, L and H. The cofactor is (R)-lipoate.

Functionally, the glycine cleavage system catalyzes the degradation of glycine. The H protein shuttles the methylamine group of glycine from the P protein to the T protein. Is also involved in protein lipoylation via its role as an octanoyl/lipoyl carrier protein intermediate. The chain is Glycine cleavage system H protein from Staphylococcus carnosus (strain TM300).